The sequence spans 404 residues: Methyltransferase-like protein 22 (404 aa).

Disordered stretches follow at residues 60-102 (TDSG…SLQA) and 115-145 (QLDE…DKVH). The segment covering 68 to 78 (SHRDVHTKEPP) has biased composition (basic and acidic residues). Positions 79–88 (SAETGSTGSP) are enriched in low complexity. Serine 132 carries the post-translational modification Phosphoserine.

Belongs to the methyltransferase superfamily. METTL22 family. In terms of assembly, interacts with members of the heat shock protein 90 and 70 families; these proteins probably are methylation substrates.

It localises to the nucleus. It carries out the reaction L-lysyl-[protein] + 3 S-adenosyl-L-methionine = N(6),N(6),N(6)-trimethyl-L-lysyl-[protein] + 3 S-adenosyl-L-homocysteine + 3 H(+). In terms of biological role, protein N-lysine methyltransferase. Trimethylates KIN at Lys-135 (in vitro). The sequence is that of Methyltransferase-like protein 22 (METTL22) from Homo sapiens (Human).